We begin with the raw amino-acid sequence, 394 residues long: GTPase Obg (394 aa).

The Obg domain occupies S4–L162. The region spanning A163–N329 is the OBG-type G domain. Residues G169–S176, F194–E198, D216–G219, T283–D286, and S310–V312 contribute to the GTP site. Positions 176 and 196 each coordinate Mg(2+). Positions K358–K394 are disordered. Over residues G361 to K394 the composition is skewed to acidic residues.

The protein belongs to the TRAFAC class OBG-HflX-like GTPase superfamily. OBG GTPase family. As to quaternary structure, monomer. Requires Mg(2+) as cofactor.

The protein localises to the cytoplasm. In terms of biological role, an essential GTPase which binds GTP, GDP and possibly (p)ppGpp with moderate affinity, with high nucleotide exchange rates and a fairly low GTP hydrolysis rate. Plays a role in control of the cell cycle, stress response, ribosome biogenesis and in those bacteria that undergo differentiation, in morphogenesis control. The chain is GTPase Obg from Phocaeicola vulgatus (strain ATCC 8482 / DSM 1447 / JCM 5826 / CCUG 4940 / NBRC 14291 / NCTC 11154) (Bacteroides vulgatus).